The chain runs to 395 residues: Putative nickel insertion protein (395 aa).

The protein belongs to the LarC family.

This is Putative nickel insertion protein from Methanopyrus kandleri (strain AV19 / DSM 6324 / JCM 9639 / NBRC 100938).